A 238-amino-acid polypeptide reads, in one-letter code: Probable septum site-determining protein MinC (238 aa).

This sequence belongs to the MinC family. In terms of assembly, interacts with MinD and FtsZ.

In terms of biological role, cell division inhibitor that blocks the formation of polar Z ring septums. Rapidly oscillates between the poles of the cell to destabilize FtsZ filaments that have formed before they mature into polar Z rings. Prevents FtsZ polymerization. This is Probable septum site-determining protein MinC from Aeromonas salmonicida (strain A449).